Reading from the N-terminus, the 877-residue chain is MPAWPRFMSLRRQYLYKALDKNHQKHPIKHPHTRFLSRLFCALAVLFSYSIYQSFRTDLKQSGSWGCEMSWMSPSYRRLEWTEFISTRYALYLYREQGLDSEDTLSGHPVLFVPGNAGSYQQVRSIASSASKQYYEQVKARERNVVTGKKIDFFTADLKEEFSAFHARTVREQAVFIQHCIKGILQEYTHLPQEKRPTQVTLLAHSMGGVVARLAMDPITSISVDIIVTLSTPHILPPLALERDMDSIYSLIRWRRQHISTHPPLISICGGISDTQIVSDSCALPFFQAGNNSDIAVFTTGIPGVWTAVEHQAIIWCHQIRWRIARMLLDMSSRANTTAKLVTAKEWLLDYQEDETLKEPRSERQHDYSVSSRNMTFIGLHQPSKAFVAQQCNGLERCRTVPSVMSLLPFPNNPSDPFPLPGEGIKPSEVMLVAEISLSSTNTVVKINASQYGQTIAGSREHHLVKGNSWKVNSSLPSLTTHHLFHFENAFLSSLVTHSLDITLGHCKDFKPLIKHISQPALELQSATFESNYYFASGRPIHLHSHSTAGPFLPYQDRAGIYLEIFQSPLCPVQQVSLRKNYYNVLAKSVTRYRMVVLAWPVGWATVVLLFQLSDFINTGEILPWNSALERIARRRMPICIVLLLLGATIQSQLPDFPMLHTFFLGVNQLEMVPLVGILGVWTFGLLCVVSFVITACLWLLGCIIQQPHGHERLEDETKSKHDWLGVVMIGAAAVLVNQVIPHQLIFLLCVILLWLSAARSKALNDRYHLISTCAIFTTLLIPFKILHVAIWSRNIWTGSAALVSTDNNFYYAIPPVLLVKCASCGGTIQKRHVCLKACRIALIILIMSSFSVGARWTWILSPIANAVLILFVASII.

A helical transmembrane segment spans residues 35–55; sequence FLSRLFCALAVLFSYSIYQSF. Residue S206 is part of the active site. N291, N336, N374, N448, and N473 each carry an N-linked (GlcNAc...) asparagine glycan. Helical transmembrane passes span 597–617, 637–657, 674–694, 735–755, 771–791, 809–829, 834–854, and 857–877; these read VLAWPVGWATVVLLFQLSDFI, MPICIVLLLLGATIQSQLPDF, PLVGILGVWTFGLLCVVSFVI, VLVNQVIPHQLIFLLCVILLW, ISTCAIFTTLLIPFKILHVAI, NFYYAIPPVLLVKCASCGGTI, VCLKACRIALIILIMSSFSVG, and WTWILSPIANAVLILFVASII.

This sequence belongs to the GPI inositol-deacylase family.

The protein localises to the endoplasmic reticulum membrane. Functionally, involved in inositol deacylation of GPI-anchored proteins which plays important roles in the quality control and ER-associated degradation of GPI-anchored proteins. In Cryptococcus neoformans var. neoformans serotype D (strain JEC21 / ATCC MYA-565) (Filobasidiella neoformans), this protein is GPI inositol-deacylase (BST1).